The primary structure comprises 233 residues: Enolase-phosphatase E1 (233 aa).

Belongs to the HAD-like hydrolase superfamily. MasA/MtnC family. Monomer. Requires Mg(2+) as cofactor.

The catalysed reaction is 5-methylsulfanyl-2,3-dioxopentyl phosphate + H2O = 1,2-dihydroxy-5-(methylsulfanyl)pent-1-en-3-one + phosphate. It functions in the pathway amino-acid biosynthesis; L-methionine biosynthesis via salvage pathway; L-methionine from S-methyl-5-thio-alpha-D-ribose 1-phosphate: step 3/6. The protein operates within amino-acid biosynthesis; L-methionine biosynthesis via salvage pathway; L-methionine from S-methyl-5-thio-alpha-D-ribose 1-phosphate: step 4/6. Functionally, bifunctional enzyme that catalyzes the enolization of 2,3-diketo-5-methylthiopentyl-1-phosphate (DK-MTP-1-P) into the intermediate 2-hydroxy-3-keto-5-methylthiopentenyl-1-phosphate (HK-MTPenyl-1-P), which is then dephosphorylated to form the acireductone 1,2-dihydroxy-3-keto-5-methylthiopentene (DHK-MTPene). The protein is Enolase-phosphatase E1 of Hahella chejuensis (strain KCTC 2396).